Consider the following 108-residue polypeptide: Protein translation factor SUI1 (108 aa).

The interval 1-20 (MSIENLKSFDPFADTGDDEA) is disordered.

This sequence belongs to the SUI1 family.

In terms of biological role, additional factor that functions in concert with eIF-2 and the initiator tRNA in directing the ribosome to the proper start site of translation. This is Protein translation factor SUI1 (SUI1A) from Eremothecium gossypii (strain ATCC 10895 / CBS 109.51 / FGSC 9923 / NRRL Y-1056) (Yeast).